The sequence spans 283 residues: Phosphatidylserine decarboxylase proenzyme (283 aa).

Residues Asp96, His152, and Ser250 each act as charge relay system; for autoendoproteolytic cleavage activity in the active site. The active-site Schiff-base intermediate with substrate; via pyruvic acid; for decarboxylase activity is the Ser250. Ser250 is modified (pyruvic acid (Ser); by autocatalysis).

Belongs to the phosphatidylserine decarboxylase family. PSD-B subfamily. Prokaryotic type I sub-subfamily. Heterodimer of a large membrane-associated beta subunit and a small pyruvoyl-containing alpha subunit. Pyruvate serves as cofactor. Post-translationally, is synthesized initially as an inactive proenzyme. Formation of the active enzyme involves a self-maturation process in which the active site pyruvoyl group is generated from an internal serine residue via an autocatalytic post-translational modification. Two non-identical subunits are generated from the proenzyme in this reaction, and the pyruvate is formed at the N-terminus of the alpha chain, which is derived from the carboxyl end of the proenzyme. The autoendoproteolytic cleavage occurs by a canonical serine protease mechanism, in which the side chain hydroxyl group of the serine supplies its oxygen atom to form the C-terminus of the beta chain, while the remainder of the serine residue undergoes an oxidative deamination to produce ammonia and the pyruvoyl prosthetic group on the alpha chain. During this reaction, the Ser that is part of the protease active site of the proenzyme becomes the pyruvoyl prosthetic group, which constitutes an essential element of the active site of the mature decarboxylase.

It is found in the cell membrane. It catalyses the reaction a 1,2-diacyl-sn-glycero-3-phospho-L-serine + H(+) = a 1,2-diacyl-sn-glycero-3-phosphoethanolamine + CO2. It functions in the pathway phospholipid metabolism; phosphatidylethanolamine biosynthesis; phosphatidylethanolamine from CDP-diacylglycerol: step 2/2. Functionally, catalyzes the formation of phosphatidylethanolamine (PtdEtn) from phosphatidylserine (PtdSer). The sequence is that of Phosphatidylserine decarboxylase proenzyme from Acinetobacter baumannii (strain ACICU).